Consider the following 345-residue polypeptide: Protein-glutamate methylesterase/protein-glutamine glutaminase (345 aa).

In terms of domain architecture, Response regulatory spans 5 to 123; that stretch reads KVIVVDDSVL…ELSKMKDDLI (119 aa). At aspartate 56 the chain carries 4-aspartylphosphate. The CheB-type methylesterase domain maps to 153–343; that stretch reads SSDSIEAVVI…DEIIKIVRGL (191 aa). Catalysis depends on residues serine 165, histidine 192, and aspartate 285.

This sequence belongs to the CheB family. In terms of processing, phosphorylated by CheA. Phosphorylation of the N-terminal regulatory domain activates the methylesterase activity.

The protein resides in the cytoplasm. It catalyses the reaction [protein]-L-glutamate 5-O-methyl ester + H2O = L-glutamyl-[protein] + methanol + H(+). It carries out the reaction L-glutaminyl-[protein] + H2O = L-glutamyl-[protein] + NH4(+). Functionally, involved in chemotaxis. Part of a chemotaxis signal transduction system that modulates chemotaxis in response to various stimuli. Catalyzes the demethylation of specific methylglutamate residues introduced into the chemoreceptors (methyl-accepting chemotaxis proteins or MCP) by CheR. Also mediates the irreversible deamidation of specific glutamine residues to glutamic acid. The chain is Protein-glutamate methylesterase/protein-glutamine glutaminase from Clostridium acetobutylicum (strain ATCC 824 / DSM 792 / JCM 1419 / IAM 19013 / LMG 5710 / NBRC 13948 / NRRL B-527 / VKM B-1787 / 2291 / W).